Reading from the N-terminus, the 214-residue chain is Large ribosomal subunit protein uL3 (214 aa).

Polar residues predominate over residues 130–151; the sequence is FSSNRASHGNSRSHNTPGSIGQ. The tract at residues 130–163 is disordered; sequence FSSNRASHGNSRSHNTPGSIGQAQDPGRVFPGKR. Q153 carries the post-translational modification N5-methylglutamine.

The protein belongs to the universal ribosomal protein uL3 family. In terms of assembly, part of the 50S ribosomal subunit. Forms a cluster with proteins L14 and L19. Post-translationally, methylated by PrmB.

One of the primary rRNA binding proteins, it binds directly near the 3'-end of the 23S rRNA, where it nucleates assembly of the 50S subunit. The protein is Large ribosomal subunit protein uL3 of Chromobacterium violaceum (strain ATCC 12472 / DSM 30191 / JCM 1249 / CCUG 213 / NBRC 12614 / NCIMB 9131 / NCTC 9757 / MK).